Consider the following 38-residue polypeptide: Photosystem II reaction center protein L (38 aa).

A helical transmembrane segment spans residues 17-37 (SLFWGLLLIFVLAVLFSNYFF).

The protein belongs to the PsbL family. PSII is composed of 1 copy each of membrane proteins PsbA, PsbB, PsbC, PsbD, PsbE, PsbF, PsbH, PsbI, PsbJ, PsbK, PsbL, PsbM, PsbT, PsbX, PsbY, PsbZ, Psb30/Ycf12, at least 3 peripheral proteins of the oxygen-evolving complex and a large number of cofactors. It forms dimeric complexes.

Its subcellular location is the plastid. The protein resides in the chloroplast thylakoid membrane. In terms of biological role, one of the components of the core complex of photosystem II (PSII). PSII is a light-driven water:plastoquinone oxidoreductase that uses light energy to abstract electrons from H(2)O, generating O(2) and a proton gradient subsequently used for ATP formation. It consists of a core antenna complex that captures photons, and an electron transfer chain that converts photonic excitation into a charge separation. This subunit is found at the monomer-monomer interface and is required for correct PSII assembly and/or dimerization. This chain is Photosystem II reaction center protein L, found in Chaetosphaeridium globosum (Charophycean green alga).